We begin with the raw amino-acid sequence, 355 residues long: Septin-2B (355 aa).

In terms of domain architecture, Septin-type G spans 33–305 (KGFEFTLMVV…ENFRSERLKK (273 aa)). The segment at 43–50 (GESGLGKS) is G1 motif. GTP contacts are provided by residues 43–50 (GESGLGKS), T77, G103, 182–190 (KADTLTLRE), G240, and R255. The segment at 100–103 (DTPG) is G3 motif. The tract at residues 181 to 184 (AKAD) is G4 motif. An important for dimerization region spans residues 259 to 269 (WGVVEVENPEH).

This sequence belongs to the TRAFAC class TrmE-Era-EngA-EngB-Septin-like GTPase superfamily. Septin GTPase family. As to quaternary structure, septins polymerize into heterooligomeric protein complexes that form filaments, and associate with cellular membranes, actin filaments and microtubules. GTPase activity is required for filament formation. Can form heterooligomers with other family members and form filaments. Interacts with wdpcp.

It is found in the cytoplasm. The protein localises to the cytoskeleton. Its subcellular location is the spindle. The protein resides in the cleavage furrow. It localises to the midbody. It is found in the cell cortex. The protein localises to the cell projection. Its subcellular location is the cilium membrane. Filament-forming cytoskeletal GTPase. Required for normal organization of the actin cytoskeleton. Plays a role in the biogenesis of polarized columnar-shaped epithelium. Required for the progression through mitosis through regulation of chromosome congression. During anaphase, may be required for chromosome segregation and spindle elongation. Plays a role in ciliogenesis and collective cell movements including convergent extension during gastrulation. In cilia, required for the integrity of the diffusion barrier at the base of the primary cilium that prevents diffusion of transmembrane proteins between the cilia and plasma membranes. Controls cell shape and not polarization of cells during convergent extension. In Xenopus tropicalis (Western clawed frog), this protein is Septin-2B (sept2-B).